Consider the following 122-residue polypeptide: Large ribosomal subunit protein uL14 (122 aa).

The protein belongs to the universal ribosomal protein uL14 family. In terms of assembly, part of the 50S ribosomal subunit. Forms a cluster with proteins L3 and L19. In the 70S ribosome, L14 and L19 interact and together make contacts with the 16S rRNA in bridges B5 and B8.

Binds to 23S rRNA. Forms part of two intersubunit bridges in the 70S ribosome. This chain is Large ribosomal subunit protein uL14, found in Lactobacillus helveticus (strain DPC 4571).